The chain runs to 259 residues: Imidazole glycerol phosphate synthase subunit HisF (259 aa).

Catalysis depends on residues Asp11 and Asp130.

This sequence belongs to the HisA/HisF family. In terms of assembly, heterodimer of HisH and HisF.

The protein localises to the cytoplasm. The enzyme catalyses 5-[(5-phospho-1-deoxy-D-ribulos-1-ylimino)methylamino]-1-(5-phospho-beta-D-ribosyl)imidazole-4-carboxamide + L-glutamine = D-erythro-1-(imidazol-4-yl)glycerol 3-phosphate + 5-amino-1-(5-phospho-beta-D-ribosyl)imidazole-4-carboxamide + L-glutamate + H(+). Its pathway is amino-acid biosynthesis; L-histidine biosynthesis; L-histidine from 5-phospho-alpha-D-ribose 1-diphosphate: step 5/9. In terms of biological role, IGPS catalyzes the conversion of PRFAR and glutamine to IGP, AICAR and glutamate. The HisF subunit catalyzes the cyclization activity that produces IGP and AICAR from PRFAR using the ammonia provided by the HisH subunit. This chain is Imidazole glycerol phosphate synthase subunit HisF, found in Lactococcus lactis subsp. cremoris (strain SK11).